The chain runs to 72 residues: SPbeta prophage-derived uncharacterized protein YoqN (72 aa).

The chain is SPbeta prophage-derived uncharacterized protein YoqN (yoqN) from Bacillus subtilis (strain 168).